We begin with the raw amino-acid sequence, 345 residues long: Phosphate acyltransferase (345 aa).

The protein belongs to the PlsX family. Homodimer. Probably interacts with PlsY.

It is found in the cytoplasm. It catalyses the reaction a fatty acyl-[ACP] + phosphate = an acyl phosphate + holo-[ACP]. Its pathway is lipid metabolism; phospholipid metabolism. Functionally, catalyzes the reversible formation of acyl-phosphate (acyl-PO(4)) from acyl-[acyl-carrier-protein] (acyl-ACP). This enzyme utilizes acyl-ACP as fatty acyl donor, but not acyl-CoA. In Proteus mirabilis (strain HI4320), this protein is Phosphate acyltransferase.